The sequence spans 304 residues: Small ribosomal subunit protein uS2 (304 aa).

Ser2 carries the post-translational modification N-acetylserine. Laminin-binding stretches follow at residues 161–180 and 205–229; these read IPCNNKGHHSVGLMWWMLAR and RDPEEIEKEEQAAAEKAVGKEEFQG. [DE]-W-[ST] repeat units lie at residues 230 to 232, 245 to 247, 275 to 277, 284 to 286, and 302 to 304; these read EWS and DWS. The laminin-binding stretch occupies residues 242–304; sequence EVADWSEGVA…DWGGATSDWS (63 aa). Residues 257-304 are disordered; the sequence is IQQFPAGTPAPAPAVKTEDWSTQPATEDWSTAPTAQASDWGGATSDWS. Residues 276–293 are compositionally biased toward polar residues; the sequence is WSTQPATEDWSTAPTAQA.

It belongs to the universal ribosomal protein uS2 family. In terms of assembly, monomer (37LRP) and homodimer (67LR). Component of the small ribosomal subunit. Mature ribosomes consist of a small (40S) and a large (60S) subunit. The 40S subunit contains about 33 different proteins and 1 molecule of RNA (18S). The 60S subunit contains about 49 different proteins and 3 molecules of RNA (28S, 5.8S and 5S). Interacts with rps21. Interacts with several laminins including at least lamb1. Interacts with mdk. In terms of processing, acylated. Acylation may be a prerequisite for conversion of the monomeric 37 kDa laminin receptor precursor (37LRP) to the mature dimeric 67 kDa laminin receptor (67LR), and may provide a mechanism for membrane association. Cleaved by stromelysin-3 (ST3) at the cell surface. Cleavage by stromelysin-3 may be a mechanism to alter cell-extracellular matrix interactions.

It localises to the cell membrane. Its subcellular location is the cytoplasm. The protein localises to the nucleus. Required for the assembly and/or stability of the 40S ribosomal subunit. Required for the processing of the 20S rRNA-precursor to mature 18S rRNA in a late step of the maturation of 40S ribosomal subunits. Also functions as a cell surface receptor for laminin. Plays a role in cell adhesion to the basement membrane and in the consequent activation of signaling transduction pathways. May play a role in cell fate determination and tissue morphogenesis. This is Small ribosomal subunit protein uS2 (rpsa) from Sparus aurata (Gilthead sea bream).